Reading from the N-terminus, the 162-residue chain is Peptide deformylase-like (162 aa).

It belongs to the polypeptide deformylase family.

The sequence is that of Peptide deformylase-like from Staphylococcus epidermidis (strain ATCC 35984 / DSM 28319 / BCRC 17069 / CCUG 31568 / BM 3577 / RP62A).